The following is a 215-amino-acid chain: 3,4-dihydroxy-2-butanone 4-phosphate synthase (215 aa).

Residues 38 to 39 (RE), Asp-43, 151 to 155 (RRGHT), and Glu-175 each bind D-ribulose 5-phosphate. Glu-39 is a Mg(2+) binding site. Residue His-154 coordinates Mg(2+).

This sequence belongs to the DHBP synthase family. Homodimer. The cofactor is Mg(2+). It depends on Mn(2+) as a cofactor.

The catalysed reaction is D-ribulose 5-phosphate = (2S)-2-hydroxy-3-oxobutyl phosphate + formate + H(+). It participates in cofactor biosynthesis; riboflavin biosynthesis; 2-hydroxy-3-oxobutyl phosphate from D-ribulose 5-phosphate: step 1/1. Its function is as follows. Catalyzes the conversion of D-ribulose 5-phosphate to formate and 3,4-dihydroxy-2-butanone 4-phosphate. In Haemophilus influenzae (strain PittGG), this protein is 3,4-dihydroxy-2-butanone 4-phosphate synthase.